The sequence spans 760 residues: 5-methyltetrahydropteroyltriglutamate--homocysteine methyltransferase (760 aa).

5-methyltetrahydropteroyltri-L-glutamate-binding positions include 15–18 (RELK) and Lys114. L-homocysteine contacts are provided by residues 436-438 (IGS) and Glu489. L-methionine is bound by residues 436-438 (IGS) and Glu489. 5-methyltetrahydropteroyltri-L-glutamate-binding positions include 520–521 (RC) and Trp566. An L-homocysteine-binding site is contributed by Asp604. Asp604 serves as a coordination point for L-methionine. Glu610 lines the 5-methyltetrahydropteroyltri-L-glutamate pocket. His646, Cys648, and Glu670 together coordinate Zn(2+). His699 acts as the Proton donor in catalysis. Cys731 serves as a coordination point for Zn(2+).

This sequence belongs to the vitamin-B12 independent methionine synthase family. It depends on Zn(2+) as a cofactor.

The catalysed reaction is 5-methyltetrahydropteroyltri-L-glutamate + L-homocysteine = tetrahydropteroyltri-L-glutamate + L-methionine. The protein operates within amino-acid biosynthesis; L-methionine biosynthesis via de novo pathway; L-methionine from L-homocysteine (MetE route): step 1/1. Functionally, catalyzes the transfer of a methyl group from 5-methyltetrahydrofolate to homocysteine resulting in methionine formation. The protein is 5-methyltetrahydropteroyltriglutamate--homocysteine methyltransferase of Shewanella oneidensis (strain ATCC 700550 / JCM 31522 / CIP 106686 / LMG 19005 / NCIMB 14063 / MR-1).